Reading from the N-terminus, the 278-residue chain is Ribosomal RNA small subunit methyltransferase A (278 aa).

Residues Asn-28, Leu-30, Gly-55, Glu-77, Asp-103, and Asn-122 each contribute to the S-adenosyl-L-methionine site.

The protein belongs to the class I-like SAM-binding methyltransferase superfamily. rRNA adenine N(6)-methyltransferase family. RsmA subfamily.

It localises to the cytoplasm. It carries out the reaction adenosine(1518)/adenosine(1519) in 16S rRNA + 4 S-adenosyl-L-methionine = N(6)-dimethyladenosine(1518)/N(6)-dimethyladenosine(1519) in 16S rRNA + 4 S-adenosyl-L-homocysteine + 4 H(+). Its function is as follows. Specifically dimethylates two adjacent adenosines (A1518 and A1519) in the loop of a conserved hairpin near the 3'-end of 16S rRNA in the 30S particle. May play a critical role in biogenesis of 30S subunits. The sequence is that of Ribosomal RNA small subunit methyltransferase A from Cereibacter sphaeroides (strain ATCC 17029 / ATH 2.4.9) (Rhodobacter sphaeroides).